Here is a 2368-residue protein sequence, read N- to C-terminus: Highly reducing polyketide synthase cla2 (2368 aa).

One can recognise a Ketosynthase family 3 (KS3) domain in the interval 10–434 (QIPIAIVGLG…GTNGLVVLEA (425 aa)). Catalysis depends on for beta-ketoacyl synthase activity residues Cys-182, His-317, and His-357. The tract at residues 548-877 (FVFTGQGAQW…RGQNALDTSL (330 aa)) is malonyl-CoA:ACP transacylase (MAT) domain. Catalysis depends on Ser-638, which acts as the For malonyltransferase activity. Residues 936–1071 (HSMIGLKQPM…GLVAIEYTNK (136 aa)) are N-terminal hotdog fold. The dehydratase (DH) domain stretch occupies residues 936–1175 (HSMIGLKQPM…AIFQSIFGST (240 aa)). Residues 936–1255 (HSMIGLKQPM…MTEPEVGDDA (320 aa)) form the PKS/mFAS DH domain. Catalysis depends on His-968, which acts as the Proton acceptor; for dehydratase activity. Positions 1099–1255 (PLMIRREKFY…MTEPEVGDDA (157 aa)) are C-terminal hotdog fold. Catalysis depends on Asp-1165, which acts as the Proton donor; for dehydratase activity. An enoylreductase (ER) domain region spans residues 1655-1967 (GFLDSLQFIK…QGKHRGKLVL (313 aa)). The segment at 1991 to 2170 (ATYLIIGGLG…AVAVNLTIIR (180 aa)) is catalytic ketoreductase (KRc) domain. In terms of domain architecture, Carrier spans 2283–2360 (QASEIITEGL…VLAKTIASRS (78 aa)). The residue at position 2320 (Ser-2320) is an O-(pantetheine 4'-phosphoryl)serine.

Its pathway is secondary metabolite biosynthesis. Functionally, highly reducing polyketide synthase; part of the gene cluster that mediates the biosynthesis of cladosporin, a tricyclic octaketide that acts as an antimalarial agent though inhibition of the Plasmodium falciparum lysyl-tRNA synthetase. The highly reducing polyketide synthase cla2 is responsible for biosynthesis up to the pentaketide stage, including of the tetrahydropyran (THP) ring, whereas the three subsequent ketide extensions with no reduction are catalyzed by the non-reducing polyketide synthase cla3. The sequence is that of Highly reducing polyketide synthase cla2 from Cladosporium cladosporioides.